Consider the following 192-residue polypeptide: Probable nicotinate-nucleotide adenylyltransferase (192 aa).

This sequence belongs to the NadD family.

The enzyme catalyses nicotinate beta-D-ribonucleotide + ATP + H(+) = deamido-NAD(+) + diphosphate. It participates in cofactor biosynthesis; NAD(+) biosynthesis; deamido-NAD(+) from nicotinate D-ribonucleotide: step 1/1. Its function is as follows. Catalyzes the reversible adenylation of nicotinate mononucleotide (NaMN) to nicotinic acid adenine dinucleotide (NaAD). This chain is Probable nicotinate-nucleotide adenylyltransferase, found in Rhizobium leguminosarum bv. trifolii (strain WSM2304).